We begin with the raw amino-acid sequence, 368 residues long: Glycine betaine monooxygenase reductase subunit (368 aa).

Positions 16 to 119 (NGRHNVRCVK…HGPVGDFNVI (104 aa)) constitute an FAD-binding FR-type domain. Residues 284-368 (LQVEFSNSGK…TPKSHVAIEF (85 aa)) enclose the 2Fe-2S ferredoxin-type domain. The [2Fe-2S] cluster site is built by Cys318, Cys323, Cys326, and Cys356.

In the N-terminal section; belongs to the FAD-binding oxidoreductase type 6 family. In terms of assembly, monomer. The system is composed of an oxygenase subunit (BmoA) and a reductase subunit (BmoB). Maximal specific activity is obtained when the ratio of BmoA to BmoB is 5:1. FAD is required as a cofactor. The cofactor is [2Fe-2S] cluster.

The catalysed reaction is glycine betaine + NADH + O2 + H(+) = N,N-dimethylglycine + formaldehyde + NAD(+) + H2O. In terms of biological role, involved in degradation of glycine betaine. Part of a Rieske-type oxygenase system that catalyzes the conversion of glycine betaine (GB) to dimethylglycine (DMG). This subunit is the ferredoxin reductase component of the system. NADH is the preferred electron donor. The sequence is that of Glycine betaine monooxygenase reductase subunit from Chromohalobacter salexigens (strain ATCC BAA-138 / DSM 3043 / CIP 106854 / NCIMB 13768 / 1H11).